Consider the following 920-residue polypeptide: Dynamin-B (920 aa).

Residues 65–84 (NSNNNNNNNNNNKINKNNNN) form a disordered region. A Dynamin-type G domain is found at 154 to 448 (EITLPQIIVV…LTKHIRDTFP (295 aa)). Positions 164 to 171 (GSQSSGKS) are G1 motif. 164–172 (GSQSSGKSS) contributes to the GTP binding site. Positions 190–192 (VTR) are G2 motif. Positions 204 to 241 (TTSRNNVNENEDEDEDDNYYDNDNDDNSLEEWGEFGHT) are disordered. A compositionally biased stretch (acidic residues) spans 212–236 (ENEDEDEDDNYYDNDNDDNSLEEWG). The segment at 290–293 (DLPG) is G3 motif. Residues 359-362 (TKLD) are G4 motif. Residues 359–365 (TKLDLMD) and 390–393 (NRSQ) contribute to the GTP site. Residues 389–392 (VNRS) are G5 motif. The segment at 680 to 790 (FQSTSSTSSS…EIQIQQQQQQ (111 aa)) is disordered. Composition is skewed to low complexity over residues 681 to 705 (QSTS…NSNP) and 724 to 751 (QIKQ…QKQQ). Positions 724-751 (QIKQQQQQQQQQQQQSYQQQQQQQQKQQ) form a coiled coil. A compositionally biased stretch (pro residues) spans 765–774 (PPSPPSPPQP). The span at 775–790 (KQQQSHEIQIQQQQQQ) shows a compositional bias: low complexity. In terms of domain architecture, GED spans 825–916 (IYLLRRLLLA…SLSQSENSDL (92 aa)).

It belongs to the TRAFAC class dynamin-like GTPase superfamily. Dynamin/Fzo/YdjA family.

Its subcellular location is the cytoplasm. In terms of biological role, enzyme hydrolyzing GTP. The protein is Dynamin-B (dymB) of Dictyostelium discoideum (Social amoeba).